Consider the following 249-residue polypeptide: MPPKRNKKAEAPIAERDAGEELDPNAPVLYVEHCRSURVFRRRAEELHSALRERGLQQLQLQLNALGAPRRGAFELSLSAGGMGKQEQVALWSGLKRGPPRARKFPTVEEVYDQIVGILGDQQESKEQTNTQKSSKIDLPGSEAIASPKKSESTEEAQENKAPTSTSTSRKSKKEQKSEEEPTQVDSKEAKQSKELVKTKRQPKAQKKQAKASESQEEVAEDKPPSSQKRKRTTRSSTDEATAGAKRRR.

Positions 1–22 (MPPKRNKKAEAPIAERDAGEEL) are disordered. The segment covering 8-19 (KAEAPIAERDAG) has biased composition (basic and acidic residues). The cysteinyl-selenocysteine (Cys-Sec); redox-active cross-link spans 34–37 (CRSU). A non-standard amino acid (selenocysteine) is located at residue selenocysteine 37. Residues 122–249 (QQESKEQTNT…EATAGAKRRR (128 aa)) are disordered. Residue serine 147 is modified to Phosphoserine. The segment covering 175-198 (EQKSEEEPTQVDSKEAKQSKELVK) has biased composition (basic and acidic residues). The segment covering 199 to 210 (TKRQPKAQKKQA) has biased composition (basic residues).

As to expression, expressed in the developing salivary gland at late stages of embryogenesis. Also expressed in brain, neuroblast and wing disk.

It is found in the cytoplasm. The protein resides in the secreted. Its function is as follows. May be involved in a redox-related process. Required for survival and specifically for salivary gland morphogenesis. In Drosophila melanogaster (Fruit fly), this protein is Selenoprotein BthD (BthD).